The chain runs to 513 residues: Matrix metalloproteinase-27 (513 aa).

Positions 1-17 (MKRLLLLFLFFITFSSA) are cleaved as a signal peptide. Residues 18 to 98 (FPLVRMTENE…PRCGVPDVGQ (81 aa)) constitute a propeptide, activation peptide. Asparagine 55 is a glycosylation site (N-linked (GlcNAc...) asparagine). Residues 89–96 (PRCGVPDV) carry the Cysteine switch motif. Cysteine 91 is a Zn(2+) binding site. Asparagine 110 is a glycosylation site (N-linked (GlcNAc...) asparagine). Ca(2+) contacts are provided by aspartate 121 and aspartate 155. Histidine 165 lines the Zn(2+) pocket. Residues aspartate 173, glycine 174, and valine 178 each coordinate Ca(2+). Histidine 181 provides a ligand contact to Zn(2+). Positions 188 and 192 each coordinate Ca(2+). A Zn(2+)-binding site is contributed by histidine 194. Ca(2+) is bound by residues aspartate 196 and glutamate 199. Histidine 216 provides a ligand contact to Zn(2+). Glutamate 217 is an active-site residue. Zn(2+)-binding residues include histidine 220 and histidine 226. Hemopexin repeat units follow at residues 276–325 (PHAC…WPSL), 326–371 (PADL…GFPG), 373–421 (VKKI…FPGI), and 422–465 (SIRV…WFQC). Residues cysteine 279 and cysteine 465 are joined by a disulfide bond. Aspartate 286 is a Ca(2+) binding site. Ca(2+)-binding residues include aspartate 377 and aspartate 426. N-linked (GlcNAc...) asparagine glycosylation is present at asparagine 452. The required for retention in the endoplasmic reticulum stretch occupies residues 466 to 513 (KEPKNSSFGFDINKEKAHSGGIKILYHKSLSLFIFGIVHLLKNTSIYQ).

This sequence belongs to the peptidase M10A family. Requires Ca(2+) as cofactor. Zn(2+) is required as a cofactor. Post-translationally, N-glycosylated. In terms of tissue distribution, expressed in B-cells. Expressed in a subset of endometrial macrophages related to menstruation and in ovarian and peritoneal endometriotic lesions (at protein level).

Its subcellular location is the endoplasmic reticulum. Functionally, matrix metalloproteinases degrade protein components of the extracellular matrix such as fibronectin, laminin, gelatins and/or collagens. The chain is Matrix metalloproteinase-27 (MMP27) from Homo sapiens (Human).